Here is a 76-residue protein sequence, read N- to C-terminus: Putative snRNP Sm-like protein (76 aa).

In terms of domain architecture, Sm spans 4–76 (RPLDVIHKSL…VLAISPVEIE (73 aa)).

It belongs to the snRNP Sm proteins family.

The polypeptide is Putative snRNP Sm-like protein (Thermococcus sibiricus (strain DSM 12597 / MM 739)).